A 118-amino-acid chain; its full sequence is Large ribosomal subunit protein uL18 (118 aa).

The protein belongs to the universal ribosomal protein uL18 family. In terms of assembly, part of the 50S ribosomal subunit; part of the 5S rRNA/L5/L18/L25 subcomplex. Contacts the 5S and 23S rRNAs.

This is one of the proteins that bind and probably mediate the attachment of the 5S RNA into the large ribosomal subunit, where it forms part of the central protuberance. This Rickettsia akari (strain Hartford) protein is Large ribosomal subunit protein uL18.